The chain runs to 855 residues: Leucine--tRNA ligase (855 aa).

Residues 42-52 (PYPSGSLHVGH) carry the 'HIGH' region motif. The tract at residues 292 to 311 (SEMDRTAEDKPKKGIPTGGK) is disordered. Residues 293–303 (EMDRTAEDKPK) are compositionally biased toward basic and acidic residues. A 'KMSKS' region motif is present at residues 614-618 (KMSKS). ATP is bound at residue K617.

It belongs to the class-I aminoacyl-tRNA synthetase family.

Its subcellular location is the cytoplasm. The enzyme catalyses tRNA(Leu) + L-leucine + ATP = L-leucyl-tRNA(Leu) + AMP + diphosphate. This Acaryochloris marina (strain MBIC 11017) protein is Leucine--tRNA ligase.